The chain runs to 340 residues: Putative phosphatidylcholine:ceramide cholinephosphotransferase 3 (340 aa).

A disordered region spans residues 1–25 (MGSVSKTVISARGASPDDEQNGTKN). 4 consecutive transmembrane segments (helical) span residues 36–56 (CIFLFFFLFIAGMSNWAVLAY), 81–101 (SSLGDFCVALCIVMLGALLVI), 178–198 (LLFSGHTLVMVTCSLAVAYYL), and 202–222 (IKPLQWVSHVACLIGMICMTI). Residue histidine 183 is part of the active site. Over 223-340 (SRTHYTIDVV…SSSSTYPLPC (118 aa)) the chain is Cytoplasmic. Residues histidine 226 and aspartate 230 contribute to the active site. A disordered region spans residues 294–313 (STPRGQERGGASAESSDSSV).

Belongs to the sphingomyelin synthase family.

Its subcellular location is the membrane. It carries out the reaction an N-acyl-sphingoid base + a 1,2-diacyl-sn-glycero-3-phosphocholine = an N-(acyl)-sphingosylphosphocholine + a 1,2-diacyl-sn-glycerol. The catalysed reaction is an N-acylsphing-4-enine + a 1,2-diacyl-sn-glycero-3-phosphocholine = a sphingomyelin + a 1,2-diacyl-sn-glycerol. The enzyme catalyses an N-acyl-15-methylhexadecasphing-4-enine + a 1,2-diacyl-sn-glycero-3-phosphocholine = an N-acyl-15-methylhexadecasphing-4-enine-1-phosphocholine + a 1,2-diacyl-sn-glycerol. Its pathway is lipid metabolism; sphingolipid metabolism. Bidirectional lipid cholinephosphotransferase capable of converting phosphatidylcholine (PC) and ceramide to sphingomyelin (SM) and diacylglycerol (DAG) and vice versa. Direction is dependent on the relative concentrations of DAG and ceramide as phosphocholine acceptors. Directly and specifically recognizes the choline head group on the substrate. Also requires two fatty chains on the choline-P donor molecule in order to be recognized efficiently as a substrate. Does not function strictly as a SM synthase. C.elegans contains specific sphingoid bases, which are unique or different in structure compared to the sphingoid bases found in other animals. Two examples of these distinctive compounds are: 15-methylhexadecasphinganine and 15-methylhexadecasphing-4-enine. The polypeptide is Putative phosphatidylcholine:ceramide cholinephosphotransferase 3 (sms-3) (Caenorhabditis elegans).